The chain runs to 390 residues: Phosphopentomutase (390 aa).

Mn(2+) is bound by residues Asp-11, Asp-283, His-288, Asp-324, His-325, and His-336.

Belongs to the phosphopentomutase family. Requires Mn(2+) as cofactor.

It is found in the cytoplasm. It carries out the reaction 2-deoxy-alpha-D-ribose 1-phosphate = 2-deoxy-D-ribose 5-phosphate. The enzyme catalyses alpha-D-ribose 1-phosphate = D-ribose 5-phosphate. It participates in carbohydrate degradation; 2-deoxy-D-ribose 1-phosphate degradation; D-glyceraldehyde 3-phosphate and acetaldehyde from 2-deoxy-alpha-D-ribose 1-phosphate: step 1/2. Its function is as follows. Isomerase that catalyzes the conversion of deoxy-ribose 1-phosphate (dRib-1-P) and ribose 1-phosphate (Rib-1-P) to deoxy-ribose 5-phosphate (dRib-5-P) and ribose 5-phosphate (Rib-5-P), respectively. The polypeptide is Phosphopentomutase (Clostridium acetobutylicum (strain ATCC 824 / DSM 792 / JCM 1419 / IAM 19013 / LMG 5710 / NBRC 13948 / NRRL B-527 / VKM B-1787 / 2291 / W)).